Reading from the N-terminus, the 424-residue chain is Adenylyltransferase and sulfurtransferase UBA4 (424 aa).

ATP-binding positions include glycine 76, aspartate 97, 104 to 108 (TNLHR), lysine 121, and 165 to 166 (DS). Residues cysteine 206 and cysteine 209 each contribute to the Zn(2+) site. The active-site Glycyl thioester intermediate; for adenylyltransferase activity is cysteine 223. A Zn(2+)-binding site is contributed by cysteine 283. Residues 326 to 422 (RNSDHVLLDV…WYSEVDQNIP (97 aa)) form the Rhodanese domain. Cysteine 382 functions as the Cysteine persulfide intermediate; for sulfurtransferase activity in the catalytic mechanism.

In the N-terminal section; belongs to the HesA/MoeB/ThiF family. UBA4 subfamily. Zn(2+) serves as cofactor.

It is found in the cytoplasm. The protein localises to the cytosol. It participates in tRNA modification; 5-methoxycarbonylmethyl-2-thiouridine-tRNA biosynthesis. Its function is as follows. Plays a central role in 2-thiolation of mcm(5)S(2)U at tRNA wobble positions of cytosolic tRNA(Lys), tRNA(Glu) and tRNA(Gln). Acts by mediating the C-terminal thiocarboxylation of sulfur carrier URM1. Its N-terminus first activates URM1 as acyl-adenylate (-COAMP), then the persulfide sulfur on the catalytic cysteine is transferred to URM1 to form thiocarboxylation (-COSH) of its C-terminus. The reaction probably involves hydrogen sulfide that is generated from the persulfide intermediate and that acts as a nucleophile towards URM1. Subsequently, a transient disulfide bond is formed. Does not use thiosulfate as sulfur donor; NFS1 probably acting as a sulfur donor for thiocarboxylation reactions. Prior mcm(5) tRNA modification by the elongator complex is required for 2-thiolation. May also be involved in protein urmylation. The chain is Adenylyltransferase and sulfurtransferase UBA4 from Meyerozyma guilliermondii (strain ATCC 6260 / CBS 566 / DSM 6381 / JCM 1539 / NBRC 10279 / NRRL Y-324) (Yeast).